Here is a 117-residue protein sequence, read N- to C-terminus: Large ribosomal subunit protein uL24 (117 aa).

Basic residues predominate over residues 1–10 (MSKQPRKQRK). Residues 1–28 (MSKQPRKQRKALYNAPAHARGKHMSATL) form a disordered region.

The protein belongs to the universal ribosomal protein uL24 family. In terms of assembly, part of the 50S ribosomal subunit.

Functionally, one of two assembly initiator proteins, it binds directly to the 5'-end of the 23S rRNA, where it nucleates assembly of the 50S subunit. Its function is as follows. Located at the polypeptide exit tunnel on the outside of the subunit. The polypeptide is Large ribosomal subunit protein uL24 (Methanobrevibacter smithii (strain ATCC 35061 / DSM 861 / OCM 144 / PS)).